The primary structure comprises 299 residues: Cytidine deaminase (299 aa).

2 CMP/dCMP-type deaminase domains span residues 56-176 (SKIE…FGPK) and 194-299 (LQGD…YIAV). Residue 97-99 (NQE) participates in substrate binding. H110 is a Zn(2+) binding site. The Proton donor role is filled by E112. Zn(2+) contacts are provided by C137 and C140.

The protein belongs to the cytidine and deoxycytidylate deaminase family. As to quaternary structure, homodimer. The cofactor is Zn(2+).

It catalyses the reaction cytidine + H2O + H(+) = uridine + NH4(+). The enzyme catalyses 2'-deoxycytidine + H2O + H(+) = 2'-deoxyuridine + NH4(+). In terms of biological role, this enzyme scavenges exogenous and endogenous cytidine and 2'-deoxycytidine for UMP synthesis. This chain is Cytidine deaminase, found in Haemophilus ducreyi (strain 35000HP / ATCC 700724).